Consider the following 227-residue polypeptide: Triosephosphate isomerase (227 aa).

Residue 6 to 8 (NLK) participates in substrate binding. Catalysis depends on His85, which acts as the Electrophile. Catalysis depends on Glu152, which acts as the Proton acceptor. Residues Gly158 and Ser188 each contribute to the substrate site.

This sequence belongs to the triosephosphate isomerase family. In terms of assembly, homodimer.

The protein localises to the cytoplasm. The catalysed reaction is D-glyceraldehyde 3-phosphate = dihydroxyacetone phosphate. It functions in the pathway carbohydrate biosynthesis; gluconeogenesis. The protein operates within carbohydrate degradation; glycolysis; D-glyceraldehyde 3-phosphate from glycerone phosphate: step 1/1. Functionally, involved in the gluconeogenesis. Catalyzes stereospecifically the conversion of dihydroxyacetone phosphate (DHAP) to D-glyceraldehyde-3-phosphate (G3P). The protein is Triosephosphate isomerase of Campylobacter concisus (strain 13826).